The following is a 141-amino-acid chain: Hemoglobin subunit alpha (141 aa).

Residues 1-141 (VLSPADKTNV…VSTVLTSKYR (141 aa)) enclose the Globin domain. Phosphoserine is present on Ser3. Residue Lys7 is modified to N6-succinyllysine. Thr8 is subject to Phosphothreonine. Lys11 carries the N6-succinyllysine modification. N6-acetyllysine; alternate is present on Lys16. Residue Lys16 is modified to N6-succinyllysine; alternate. Residue Ser35 is modified to Phosphoserine. Lys40 is subject to N6-succinyllysine. O2 is bound at residue His58. His87 is a binding site for heme b. Ser102 is modified (phosphoserine). Thr108 is subject to Phosphothreonine. Phosphoserine is present on residues Ser124 and Ser131. Thr134 and Thr137 each carry phosphothreonine. Ser138 carries the phosphoserine modification.

This sequence belongs to the globin family. In terms of assembly, heterotetramer of two alpha chains and two beta chains. As to expression, red blood cells.

In terms of biological role, involved in oxygen transport from the lung to the various peripheral tissues. Hemopressin acts as an antagonist peptide of the cannabinoid receptor CNR1. Hemopressin-binding efficiently blocks cannabinoid receptor CNR1 and subsequent signaling. This is Hemoglobin subunit alpha (HBA) from Physeter macrocephalus (Sperm whale).